Consider the following 157-residue polypeptide: MAAADVEYRCFVGGLAWATSNESLENAFASYGEILDSKVITDRETGRSRGFGFVTFSSENSMLDAIENMNGKELDGRNITVNQAQSRGGGGGGGGYGGGRGGGGYGGGRRDGGYGGGGGYGGRREGGGGGYGGGGGYGGRREGGGGGYGGGGGGWRD.

One can recognise an RRM domain in the interval 8 to 86 (YRCFVGGLAW…RNITVNQAQS (79 aa)). Residues 82-157 (NQAQSRGGGG…YGGGGGGWRD (76 aa)) are disordered. A compositionally biased stretch (gly residues) spans 87–157 (RGGGGGGGGY…YGGGGGGWRD (71 aa)).

Its function is as follows. Possibly has a role in RNA transcription or processing during stress. The protein is Glycine-rich RNA-binding, abscisic acid-inducible protein (RAB15) of Zea mays (Maize).